A 232-amino-acid polypeptide reads, in one-letter code: Ubiquinone biosynthesis O-methyltransferase (232 aa).

The S-adenosyl-L-methionine site is built by R36, G55, D76, and M120.

This sequence belongs to the methyltransferase superfamily. UbiG/COQ3 family.

The catalysed reaction is a 3-demethylubiquinol + S-adenosyl-L-methionine = a ubiquinol + S-adenosyl-L-homocysteine + H(+). It catalyses the reaction a 3-(all-trans-polyprenyl)benzene-1,2-diol + S-adenosyl-L-methionine = a 2-methoxy-6-(all-trans-polyprenyl)phenol + S-adenosyl-L-homocysteine + H(+). It participates in cofactor biosynthesis; ubiquinone biosynthesis. Its function is as follows. O-methyltransferase that catalyzes the 2 O-methylation steps in the ubiquinone biosynthetic pathway. The protein is Ubiquinone biosynthesis O-methyltransferase of Thiobacillus denitrificans (strain ATCC 25259 / T1).